Consider the following 936-residue polypeptide: Protein translocase subunit SecA (936 aa).

Residues Gln87, 105 to 109 (GEGKT), and Asp515 contribute to the ATP site. Positions 920, 922, 931, and 932 each coordinate Zn(2+).

It belongs to the SecA family. In terms of assembly, monomer and homodimer. Part of the essential Sec protein translocation apparatus which comprises SecA, SecYEG and auxiliary proteins SecDF-YajC and YidC. The cofactor is Zn(2+).

It localises to the cell inner membrane. The protein resides in the cytoplasm. It catalyses the reaction ATP + H2O + cellular proteinSide 1 = ADP + phosphate + cellular proteinSide 2.. Functionally, part of the Sec protein translocase complex. Interacts with the SecYEG preprotein conducting channel. Has a central role in coupling the hydrolysis of ATP to the transfer of proteins into and across the cell membrane, serving both as a receptor for the preprotein-SecB complex and as an ATP-driven molecular motor driving the stepwise translocation of polypeptide chains across the membrane. The protein is Protein translocase subunit SecA of Paraburkholderia phymatum (strain DSM 17167 / CIP 108236 / LMG 21445 / STM815) (Burkholderia phymatum).